The following is a 408-amino-acid chain: Putative agmatinase 3 (408 aa).

The N-terminal stretch at 1–21 (MKSVEWFTWGVFLLLSGFGEA) is a signal peptide. Mn(2+) is bound by residues His-198, Asp-222, His-224, Asp-226, Asp-319, and Asp-321.

It belongs to the arginase family. The cofactor is Mn(2+).

The catalysed reaction is agmatine + H2O = urea + putrescine. The polypeptide is Putative agmatinase 3 (Schizosaccharomyces pombe (strain 972 / ATCC 24843) (Fission yeast)).